The chain runs to 559 residues: MAASTAAPCYDAPEGVDVRGRYDREFAGILTRDALDFVAGLQREFRGAVRYAMEQRREAQRRYDAGELPRFDPATTLVREGDWTCASVPPAVADRTVEITGPAEPRKMVINALNSGAKVFMADFEDAMSPTWENLMHGQVNLRDAVAGTISFRDAPRGRTYELNDRTAKLFVRPRGWHLPEAHILIDGEPAIGCLVDFGLYFFHNHAAFGAGQGAGFGPLCDLPKMEHSREARIWNGVFQRAEKAAGIEPGSIRATVLVETLPAVFQMNEILHELREHSAGLNCGRWDYIFSYVKTFRAHPDRLLPDRALVGMAQHFMRSYSHLLIHTCHRRGVHAMGGMAAQIPIKDDAAANEAALELVRKDKLREVRAGHDGTWAAHPGLIPAIREVFEGHLGGRPNQIGDAAGHEGASVKEEDLIQPPRGARTVDGLRLNVRVGVQYLAAWLAGSGSVPLYNLMEDAATAEISRVQNWQWLRHGAALDAGGVEVRATPELLARVVEEEMARVEAEVGPDRFRKGRYAEAGRIFSRQCTAPELDDFLTLDAYNLIVAHHPGASPCKL.

Catalysis depends on Arg-173, which acts as the Proton acceptor. Asp-459 serves as the catalytic Proton donor. Positions 557-559 (CKL) match the Microbody targeting signal motif.

This sequence belongs to the malate synthase family.

Its subcellular location is the glyoxysome. It catalyses the reaction glyoxylate + acetyl-CoA + H2O = (S)-malate + CoA + H(+). The protein operates within carbohydrate metabolism; glyoxylate cycle; (S)-malate from isocitrate: step 2/2. This is Malate synthase, glyoxysomal (LIP) from Zea mays (Maize).